We begin with the raw amino-acid sequence, 543 residues long: ADP,ATP carrier protein 3 (543 aa).

Transmembrane regions (helical) follow at residues 46–66 (VLYLSLLFGVITMVHTIMGNL), 86–106 (IFLPPCSLLFIWAIQLGLSLF), 111–131 (MFDITLILFSGCYILFGLVVW), 175–195 (FLFLCSEMWGALVVSYFFNIF), 209–229 (ISVYNISNAISIFLSAVLTLV), 243–263 (ELGFRILILVLGSTVIGILAL), 306–326 (LLIAISLNVLLYGVTSTLVEA), 346–366 (FANFYNGLEQIIIAISLLVVI), 382–402 (LASLPIVIAMFSLFSVFLIAF), and 504–524 (SVSGILIVIIIAMWYFILKYL).

It belongs to the ADP/ATP translocase tlc family.

It localises to the mitosome membrane. ATP transporter involved in the uptake of ATP from the parasite cell cytoplasm into the mitosome matrix. Equilibrates nucleotide pools across a concentration gradient between both sides of the mitosome membrane. The sequence is that of ADP,ATP carrier protein 3 (NTT3) from Encephalitozoon cuniculi (strain GB-M1) (Microsporidian parasite).